We begin with the raw amino-acid sequence, 289 residues long: Aquaporin PIP1-1 (289 aa).

Residues 1–36 (MEGKEEDVRLGANRYSERQPIGTAAQGAGDDKDYKE) form a disordered region. 2 helical membrane passes run 58-78 (IAEFVATFLFLYITILTVMGV) and 93-115 (IAWSFGGMIFALVYCTAGISGGH). Residues 117 to 119 (NPA) carry the NPA 1 motif. The next 3 membrane-spanning stretches (helical) occupy residues 136-156 (IFYIVMQCLGAICGAGVVKGF), 178-198 (GDGLGAEIVGTFILVYTVFSA), and 212-232 (ILAPLPIGFAVFLVHLATIPI). Positions 238-240 (NPA) match the NPA 2 motif. A helical transmembrane segment spans residues 260–280 (IFWVGPFVGAALAAIYHQVII).

Belongs to the MIP/aquaporin (TC 1.A.8) family. PIP (TC 1.A.8.11) subfamily. As to expression, expressed in roots, leaves and anthers.

Its subcellular location is the cell membrane. May function as water channel to facilitate the transport of water across cell membrane. This is Aquaporin PIP1-1 (PIP1-1) from Oryza sativa subsp. japonica (Rice).